We begin with the raw amino-acid sequence, 439 residues long: Enolase (439 aa).

Glutamine 163 is a (2R)-2-phosphoglycerate binding site. Glutamate 205 (proton donor) is an active-site residue. Positions 242, 287, and 314 each coordinate Mg(2+). (2R)-2-phosphoglycerate-binding residues include lysine 339, arginine 368, serine 369, and lysine 390. Residue lysine 339 is the Proton acceptor of the active site.

Belongs to the enolase family. Mg(2+) serves as cofactor.

Its subcellular location is the cytoplasm. It localises to the secreted. The protein resides in the cell surface. It carries out the reaction (2R)-2-phosphoglycerate = phosphoenolpyruvate + H2O. Its pathway is carbohydrate degradation; glycolysis; pyruvate from D-glyceraldehyde 3-phosphate: step 4/5. Its function is as follows. Catalyzes the reversible conversion of 2-phosphoglycerate (2-PG) into phosphoenolpyruvate (PEP). It is essential for the degradation of carbohydrates via glycolysis. This is Enolase from Levilactobacillus brevis (strain ATCC 367 / BCRC 12310 / CIP 105137 / JCM 1170 / LMG 11437 / NCIMB 947 / NCTC 947) (Lactobacillus brevis).